The sequence spans 514 residues: Beta-galactoside alpha-2,6-sialyltransferase 2 (514 aa).

The Cytoplasmic portion of the chain corresponds to 1–10; that stretch reads MKSSLKQWRR. A helical; Signal-anchor for type II membrane protein transmembrane segment spans residues 11-31; the sequence is LALGLILVWALLFLALLSYFM. The Lumenal segment spans residues 32–514; that stretch reads ESRVDDPHAA…PGFNKVHCEP (483 aa). Residues 70-92 show a composition bias toward low complexity; sequence ATSSAPSTSSNTQQEQSQEENPS. The interval 70-183 is disordered; the sequence is ATSSAPSTSS…TKRVARHGSS (114 aa). Residues 119–132 show a composition bias toward polar residues; that stretch reads FGTQDVGSRSTGVS. Acidic residues predominate over residues 145–166; sequence PQEDEDEEEEVIGGEEEDEEGG. 3 disulfide bridges follow: Cys246–Cys512, Cys289–Cys441, and Cys459–Cys470. Residues Asn330, Asn350, and Asn357 are each glycosylated (N-linked (GlcNAc...) asparagine).

Belongs to the glycosyltransferase 29 family.

The protein localises to the golgi apparatus. It localises to the golgi stack membrane. It carries out the reaction a beta-D-galactoside + CMP-N-acetyl-beta-neuraminate = an N-acetyl-alpha-neuraminyl-(2-&gt;6)-beta-D-galactosyl derivative + CMP + H(+). Transfers sialic acid from the donor of substrate CMP-sialic acid to galactose containing acceptor substrates. This is Beta-galactoside alpha-2,6-sialyltransferase 2 (st6gal2) from Danio rerio (Zebrafish).